The following is a 322-amino-acid chain: ATP-dependent 6-phosphofructokinase (322 aa).

ATP-binding positions include Gly12, 73–74, and 103–106; these read RF and GDGT. Asp104 lines the Mg(2+) pocket. 126–128 is a substrate binding site; sequence TID. Residue Asp128 is the Proton acceptor of the active site. Arg155 is a binding site for ADP. Residues Arg163 and 170–172 each bind substrate; that span reads MGR. ADP is bound by residues 186 to 188, Lys212, and 214 to 216; these read GSE and KPS. Substrate contacts are provided by residues Glu223, Arg245, and 251-254; that span reads HTQR.

The protein belongs to the phosphofructokinase type A (PFKA) family. ATP-dependent PFK group I subfamily. Prokaryotic clade 'B1' sub-subfamily. As to quaternary structure, homotetramer. The cofactor is Mg(2+).

It is found in the cytoplasm. It carries out the reaction beta-D-fructose 6-phosphate + ATP = beta-D-fructose 1,6-bisphosphate + ADP + H(+). The protein operates within carbohydrate degradation; glycolysis; D-glyceraldehyde 3-phosphate and glycerone phosphate from D-glucose: step 3/4. Its activity is regulated as follows. Allosterically activated by ADP and other diphosphonucleosides, and allosterically inhibited by phosphoenolpyruvate. Catalyzes the phosphorylation of D-fructose 6-phosphate to fructose 1,6-bisphosphate by ATP, the first committing step of glycolysis. The protein is ATP-dependent 6-phosphofructokinase of Mesomycoplasma hyopneumoniae (strain 7448) (Mycoplasma hyopneumoniae).